Reading from the N-terminus, the 352-residue chain is UDP-3-O-acylglucosamine N-acyltransferase (352 aa).

The active-site Proton acceptor is the His-242.

Belongs to the transferase hexapeptide repeat family. LpxD subfamily. In terms of assembly, homotrimer.

The enzyme catalyses a UDP-3-O-[(3R)-3-hydroxyacyl]-alpha-D-glucosamine + a (3R)-hydroxyacyl-[ACP] = a UDP-2-N,3-O-bis[(3R)-3-hydroxyacyl]-alpha-D-glucosamine + holo-[ACP] + H(+). It participates in bacterial outer membrane biogenesis; LPS lipid A biosynthesis. Its function is as follows. Catalyzes the N-acylation of UDP-3-O-acylglucosamine using 3-hydroxyacyl-ACP as the acyl donor. Is involved in the biosynthesis of lipid A, a phosphorylated glycolipid that anchors the lipopolysaccharide to the outer membrane of the cell. In Alkalilimnicola ehrlichii (strain ATCC BAA-1101 / DSM 17681 / MLHE-1), this protein is UDP-3-O-acylglucosamine N-acyltransferase.